The chain runs to 263 residues: uncharacterized protein (263 aa).

A WD repeat occupies Ser53 to Thr89.

This is an uncharacterized protein from Deinococcus radiodurans (strain ATCC 13939 / DSM 20539 / JCM 16871 / CCUG 27074 / LMG 4051 / NBRC 15346 / NCIMB 9279 / VKM B-1422 / R1).